Here is a 241-residue protein sequence, read N- to C-terminus: Adenylate kinase 3 (241 aa).

38-43 (GCGKGT) contacts ATP. The interval 58–87 (ATGDMLRAAVAAKTPLGIKAKEAMDKGELV) is NMP. AMP is bound by residues Thr59, Arg64, 85–87 (ELV), 113–116 (GFPR), and Gln120. The tract at residues 154-191 (GRWIHPSSGRSYHTKFAPPKTPGLDDVTGEPLIQRKDD) is LID. Residue Arg155 coordinates ATP. AMP-binding residues include Arg188 and Arg199.

It belongs to the adenylate kinase family.

The protein resides in the cytoplasm. The catalysed reaction is AMP + ATP = 2 ADP. Catalyzes the reversible transfer of the terminal phosphate group between ATP and AMP. Plays an important role in cellular energy homeostasis and in adenine nucleotide metabolism. The sequence is that of Adenylate kinase 3 (ADK-A) from Oryza sativa subsp. japonica (Rice).